Here is a 163-residue protein sequence, read N- to C-terminus: Large ribosomal subunit protein bL17 (163 aa).

Positions 127–163 are disordered; that stretch reads VAKKATRTRRSKKSAEAAAPAAVEAPATEEPKAESAE. Over residues 129-138 the composition is skewed to basic residues; it reads KKATRTRRSK. Low complexity predominate over residues 142–154; the sequence is EAAAPAAVEAPAT.

This sequence belongs to the bacterial ribosomal protein bL17 family. Part of the 50S ribosomal subunit. Contacts protein L32.

This chain is Large ribosomal subunit protein bL17, found in Bacteroides thetaiotaomicron (strain ATCC 29148 / DSM 2079 / JCM 5827 / CCUG 10774 / NCTC 10582 / VPI-5482 / E50).